The primary structure comprises 290 residues: Ribosomal protein L11 methyltransferase (290 aa).

The S-adenosyl-L-methionine site is built by T135, G158, D180, and N227.

The protein belongs to the methyltransferase superfamily. PrmA family.

It is found in the cytoplasm. The catalysed reaction is L-lysyl-[protein] + 3 S-adenosyl-L-methionine = N(6),N(6),N(6)-trimethyl-L-lysyl-[protein] + 3 S-adenosyl-L-homocysteine + 3 H(+). In terms of biological role, methylates ribosomal protein L11. The chain is Ribosomal protein L11 methyltransferase from Mesorhizobium japonicum (strain LMG 29417 / CECT 9101 / MAFF 303099) (Mesorhizobium loti (strain MAFF 303099)).